The primary structure comprises 146 residues: NADH-ubiquinone oxidoreductase chain 6 (146 aa).

Transmembrane regions (helical) follow at residues 10–30 (LTAI…ILFV), 41–61 (FVLM…MLFL), 75–95 (GTIT…LDIT), and 124–144 (AMLL…AMSI).

This sequence belongs to the complex I subunit 6 family.

It localises to the mitochondrion membrane. The catalysed reaction is a ubiquinone + NADH + 5 H(+)(in) = a ubiquinol + NAD(+) + 4 H(+)(out). Functionally, core subunit of the mitochondrial membrane respiratory chain NADH dehydrogenase (Complex I) that is believed to belong to the minimal assembly required for catalysis. Complex I functions in the transfer of electrons from NADH to the respiratory chain. The immediate electron acceptor for the enzyme is believed to be ubiquinone. The protein is NADH-ubiquinone oxidoreductase chain 6 (ND6) of Debaryomyces hansenii (strain ATCC 36239 / CBS 767 / BCRC 21394 / JCM 1990 / NBRC 0083 / IGC 2968) (Yeast).